Reading from the N-terminus, the 525-residue chain is MIKNIDRHRILILDFGSQYTQLLARRIREMGVYSELWPWDVAAERIQAFHPQGIILSGGPESATENDTPRAPDIIFTLGVPVLGICYGMQTMAIQLGGTVSNTHQGEFGYAPLALKNKNALIDGLEDFVNANNEPCLKVWMSHADKVTKLPEHFTCIASTETCPIAIMAHPEKHFYGVQFHPEVTHTLQGQSLLKRFVLQICQCEPLWTPRNIIDQTLSELKDQIGDDQVILGLSGGVDSAVTAILLHRAIGKSLTCVFVDNGLLRLNESQQVLNIFQDQFGLNIIHVSAANRFMNALKGIQDPEKKRKVIGRVFVDIFDEQAAKQKGVKWLAQGTIYTDLVESAASGTAKSHLIKSHHNVAGLPKEMKLGLIEPLKELFKDEVRQLGLELGLPNAMLHRHPFPGPGLGVRVLGEVKQEYCDLLRQADAIFIQELQKAELYQKVSQAFAVFLPIRSVGVMGDGRKYEWVIALRAIETVDFMTAHWAELPYDLLGRVSNRIINEVKGISRVVYDISGKPPATIEWE.

The 199-residue stretch at arginine 9 to leucine 207 folds into the Glutamine amidotransferase type-1 domain. The active-site Nucleophile is cysteine 86. Active-site residues include histidine 181 and glutamate 183. Positions tryptophan 208–arginine 400 constitute a GMPS ATP-PPase domain. Residue serine 235–alanine 241 participates in ATP binding.

As to quaternary structure, homodimer.

The catalysed reaction is XMP + L-glutamine + ATP + H2O = GMP + L-glutamate + AMP + diphosphate + 2 H(+). Its pathway is purine metabolism; GMP biosynthesis; GMP from XMP (L-Gln route): step 1/1. In terms of biological role, catalyzes the synthesis of GMP from XMP. This is GMP synthase [glutamine-hydrolyzing] from Hamiltonella defensa subsp. Acyrthosiphon pisum (strain 5AT).